A 564-amino-acid polypeptide reads, in one-letter code: Nucleoprotein (564 aa).

Positions 54–236 are binding site for the cap structure m7GTP; it reads LRKNKRGEED…VTKDESSINI (183 aa). Aspartate 380 and glutamate 382 together coordinate Mn(2+). Residues glutamate 390, cysteine 497, histidine 500, and cysteine 525 each coordinate Zn(2+). Aspartate 529 contacts Mn(2+).

This sequence belongs to the arenaviridae nucleocapsid protein family. In terms of assembly, homomultimerizes to form the nucleocapsid. Binds to viral genomic RNA. Interacts with glycoprotein G2. Interacts with protein Z; this interaction probably directs the encapsidated genome to budding sites. Interacts with protein L; this interaction does not interfere with Z-L interaction. Interacts with host IKBKE (via Protein kinase domain); the interaction inhibits IKBKE kinase activity.

The protein localises to the virion. It is found in the host cytoplasm. In terms of biological role, encapsidates the genome, protecting it from nucleases. The encapsidated genomic RNA is termed the nucleocapsid (NC). Serves as template for viral transcription and replication. The increased presence of protein N in host cell does not seem to trigger the switch from transcription to replication as observed in other negative strain RNA viruses. Through the interaction with host IKBKE, strongly inhibits the phosphorylation and nuclear translocation of host IRF3, a protein involved in interferon activation pathway, leading to the inhibition of interferon-beta and IRF3-dependent promoters activation. Also encodes a functional 3'-5' exoribonuclease that degrades preferentially dsRNA substrates and thereby participates in the suppression of interferon induction. This chain is Nucleoprotein, found in Calomys callosus (Large vesper mouse).